The sequence spans 497 residues: Serine hydroxymethyltransferase (497 aa).

(6S)-5,6,7,8-tetrahydrofolate contacts are provided by residues Leu176 and 180–182; that span reads GHL. An N6-(pyridoxal phosphate)lysine modification is found at Lys289.

It belongs to the SHMT family. Homodimer. Pyridoxal 5'-phosphate serves as cofactor.

The protein resides in the cytoplasm. The enzyme catalyses (6R)-5,10-methylene-5,6,7,8-tetrahydrofolate + glycine + H2O = (6S)-5,6,7,8-tetrahydrofolate + L-serine. Its pathway is one-carbon metabolism; tetrahydrofolate interconversion. It participates in amino-acid biosynthesis; glycine biosynthesis; glycine from L-serine: step 1/1. Functionally, catalyzes the reversible interconversion of serine and glycine with tetrahydrofolate (THF) serving as the one-carbon carrier. This reaction serves as the major source of one-carbon groups required for the biosynthesis of purines, thymidylate, methionine, and other important biomolecules. Also exhibits THF-independent aldolase activity toward beta-hydroxyamino acids, producing glycine and aldehydes, via a retro-aldol mechanism. The protein is Serine hydroxymethyltransferase of Chlamydia trachomatis serovar A (strain ATCC VR-571B / DSM 19440 / HAR-13).